A 284-amino-acid polypeptide reads, in one-letter code: MKQKVVSIGDINVANDLPFVLFGGMNVLESRDLAMRICEHYVTVTQKLGIPYVFKASFDKANRSSIHSYRGPGLEEGMKIFEEIKKTFGVKTITDVHEASQAQPVSEVVDVIQLPAFLARQTDLVEAMAKTGAVINVKKPQFVSPGQMGNIVDKFKEGGNDQVILCDRGSNFGYDNLVVDMLGINVMKNATGGHPVIFDVTHALQTRDPFGAASGGRRAQVAELARAGMAVGLAGLFIEAHPEPNSAKCDGPSALPLDKLEPFLVQMKAIDDLVKSFPELDTSN.

It belongs to the KdsA family.

The protein resides in the cytoplasm. The enzyme catalyses D-arabinose 5-phosphate + phosphoenolpyruvate + H2O = 3-deoxy-alpha-D-manno-2-octulosonate-8-phosphate + phosphate. Its pathway is carbohydrate biosynthesis; 3-deoxy-D-manno-octulosonate biosynthesis; 3-deoxy-D-manno-octulosonate from D-ribulose 5-phosphate: step 2/3. The protein operates within bacterial outer membrane biogenesis; lipopolysaccharide biosynthesis. This is 2-dehydro-3-deoxyphosphooctonate aldolase from Serratia proteamaculans (strain 568).